A 250-amino-acid polypeptide reads, in one-letter code: Small ribosomal subunit protein uS2 (250 aa).

A disordered region spans residues 225 to 250 (GAQGGRQARGEDLGAAVEAPSEDALA).

It belongs to the universal ribosomal protein uS2 family.

The chain is Small ribosomal subunit protein uS2 from Rhizorhabdus wittichii (strain DSM 6014 / CCUG 31198 / JCM 15750 / NBRC 105917 / EY 4224 / RW1) (Sphingomonas wittichii).